Consider the following 46-residue polypeptide: Mu-segestritoxin-Sf1d (46 aa).

Intrachain disulfides connect cysteine 3–cysteine 19, cysteine 10–cysteine 22, cysteine 18–cysteine 42, and cysteine 24–cysteine 40. The tract at residues 31 to 33 is keys region for toxin activity; sequence RPW.

It belongs to the neurotoxin 16 (SFI) family. In terms of tissue distribution, expressed by the venom gland.

Its subcellular location is the secreted. In terms of biological role, insecticidal toxin. It inhibits insect voltage-gated sodium channels (Nav) by partially blocking the channel pore in DUM neurons from the American cockroach, not by acting as a gating modifier. The inhibition is only partially reversible after prolonged washout. In vivo, the toxin causes flaccid paralysis followed by death when injected into Heliothis virescens larvae. It also causes uncoordinated movements followed by full paralysis to sheep blowflies (Lucilia cuprina). When the toxin is fused to snowdrop lectin, it is orally active against larvae of the tomato moth (Laconobia oleracea), the rice brown planthopper (Nilaparvata lugens), and the peach-potato aphid (Myzus persicae). The polypeptide is Mu-segestritoxin-Sf1d (Segestria florentina (Tube-web spider)).